A 314-amino-acid chain; its full sequence is Ribose-phosphate pyrophosphokinase (314 aa).

ATP is bound by residues Asp37–Glu39 and Arg96–Gln97. Residues His131 and Asp170 each contribute to the Mg(2+) site. The active site involves Lys194. Residues Arg196, Asp220, and Asp224–Thr228 each bind D-ribose 5-phosphate.

Belongs to the ribose-phosphate pyrophosphokinase family. Class I subfamily. As to quaternary structure, homohexamer. The cofactor is Mg(2+).

It localises to the cytoplasm. It catalyses the reaction D-ribose 5-phosphate + ATP = 5-phospho-alpha-D-ribose 1-diphosphate + AMP + H(+). It participates in metabolic intermediate biosynthesis; 5-phospho-alpha-D-ribose 1-diphosphate biosynthesis; 5-phospho-alpha-D-ribose 1-diphosphate from D-ribose 5-phosphate (route I): step 1/1. Involved in the biosynthesis of the central metabolite phospho-alpha-D-ribosyl-1-pyrophosphate (PRPP) via the transfer of pyrophosphoryl group from ATP to 1-hydroxyl of ribose-5-phosphate (Rib-5-P). The chain is Ribose-phosphate pyrophosphokinase from Vibrio parahaemolyticus serotype O3:K6 (strain RIMD 2210633).